A 35-amino-acid polypeptide reads, in one-letter code: MSDIN-like toxin proprotein 6 (35 aa).

Residues 1 to 10 (MSDINTTRLP) constitute a propeptide that is removed on maturation. A cross-link (cyclopeptide (Phe-Pro)) is located at residues 11–18 (FVFVASPP). A propeptide spanning residues 19–35 (CVGDDIAMVLTRGENLC) is cleaved from the precursor.

Belongs to the MSDIN fungal toxin family. In terms of processing, processed by the macrocyclase-peptidase enzyme POPB to yield a toxic cyclic octapeptide. POPB first removes 10 residues from the N-terminus. Conformational trapping of the remaining peptide forces the enzyme to release this intermediate rather than proceed to macrocyclization. The enzyme rebinds the remaining peptide in a different conformation and catalyzes macrocyclization of the N-terminal 8 residues. As to expression, expressed in basidiocarps.

Its function is as follows. Probable toxin that belongs to the MSDIN-like toxin family responsible for a large number of food poisoning cases and deaths. This is MSDIN-like toxin proprotein 6 from Amanita exitialis (Guangzhou destroying angel).